A 447-amino-acid chain; its full sequence is GTPase Der (447 aa).

EngA-type G domains follow at residues 3–167 (PVIA…VQER) and 181–354 (VKIA…AAAM). GTP is bound by residues 9–16 (GRPNVGKS), 56–60 (DTGGF), 119–122 (NKAE), 187–194 (GRPNVGKS), 234–238 (DTAGL), and 299–302 (NKWD). Residues 355–439 (VKLPTPQLTR…PLRIEFRTNK (85 aa)) form the KH-like domain.

It belongs to the TRAFAC class TrmE-Era-EngA-EngB-Septin-like GTPase superfamily. EngA (Der) GTPase family. In terms of assembly, associates with the 50S ribosomal subunit.

Its function is as follows. GTPase that plays an essential role in the late steps of ribosome biogenesis. The protein is GTPase Der of Cupriavidus taiwanensis (strain DSM 17343 / BCRC 17206 / CCUG 44338 / CIP 107171 / LMG 19424 / R1) (Ralstonia taiwanensis (strain LMG 19424)).